We begin with the raw amino-acid sequence, 762 residues long: MSVAETEEGVFEATATIDNGSFGTRTIRFETGRLAQQAAGSVVAYLDDENMLLSATTASKNPKEHFDFFPLTVDVEERMYAAGRIPGSFFRREGRPSTDAILTCRLIDRPLRPSFVNGLRNEIQVVVTILSLDPNDLYDVVAINAASASTQLAGLPFSGPVGGVRVALIDGQWVAFPNVEQLERAVFDMVVAGRIVGTEEDGTPDVAIMMVEAEATDKVIELVEGGAPAPTESVVAQGLEAAKPFIAALCTAQQELADASGATAKTGAEYPVFPEYGDDVYYAVSSVATDGLAAALTIGGKAERNQRTEEIKAEVLERLADTYEGREKEIGAAFRSLTKKLVRQRIVTDHFRIDGRGITDIRALSAEVALVPRAHGSALFERGETQILGVTTLDMVKMAQQIDSLGPETTKRYMHHYNFPPFSTGETGRVGSPKRREIGHGALAERALMPVLPSVEEFPYAIRQVSEALGSNGSTSMGSVCASTLALLNAGVPLKAPVAGIAMGLVSDDVEVDGKTERRFVTLTDILGAEDAFGDMDFKVAGTKDFVTALQLDTKLDGIPSQVLAGALAQAKDARLTILEVMAEAIDTPDEMSPYAPRVTTIKVPVDKIGEVIGPKGKVINSITEETGAQISIEDDGTVFVGATDGPSAQAAIDKINAIANPQLPTVGERFLGTVVKTTDFGAFVSLLPGRDGLVHISKLGKGKRIAKVEDVVNVGDKLRVEIADIDKRGKISLVLVAEDDDSAAAAAADSPAPADAATASS.

Residues D531 and D537 each coordinate Mg(2+). The KH domain maps to 597–656 (PRVTTIKVPVDKIGEVIGPKGKVINSITEETGAQISIEDDGTVFVGATDGPSAQAAIDKI). The region spanning 668–737 (GERFLGTVVK…KRGKISLVLV (70 aa)) is the S1 motif domain.

The protein belongs to the polyribonucleotide nucleotidyltransferase family. Mg(2+) is required as a cofactor.

Its subcellular location is the cytoplasm. The catalysed reaction is RNA(n+1) + phosphate = RNA(n) + a ribonucleoside 5'-diphosphate. Involved in mRNA degradation. Catalyzes the phosphorolysis of single-stranded polyribonucleotides processively in the 3'- to 5'-direction. This is Polyribonucleotide nucleotidyltransferase from Mycobacterium marinum (strain ATCC BAA-535 / M).